Here is a 74-residue protein sequence, read N- to C-terminus: Beta-defensin 39 (74 aa).

A signal peptide spans 1–23 (MKISYFLLLILSLGSSQINPVSG). 3 cysteine pairs are disulfide-bonded: Cys-29–Cys-58, Cys-36–Cys-51, and Cys-41–Cys-59.

This sequence belongs to the beta-defensin family. Only expressed in epididymis (caput, corpus and cauda).

The protein resides in the secreted. Its function is as follows. Has antibacterial activity. The polypeptide is Beta-defensin 39 (Defb39) (Mus musculus (Mouse)).